The following is a 73-amino-acid chain: Toxin Td7 (73 aa).

Positions 1-7 are cleaved as a signal peptide; the sequence is IGMAVEC. One can recognise an LCN-type CS-alpha/beta domain in the interval 8–70; the sequence is KDGYLVGADG…VWDSATNRCG (63 aa). 4 disulfides stabilise this stretch: cysteine 18–cysteine 69, cysteine 22–cysteine 44, cysteine 30–cysteine 50, and cysteine 34–cysteine 52. A Lysine amide modification is found at lysine 71.

Belongs to the long (4 C-C) scorpion toxin superfamily. Sodium channel inhibitor family. Beta subfamily. Expressed by the venom gland.

The protein localises to the secreted. Beta toxins bind voltage-independently at site-4 of sodium channels (Nav) and shift the voltage of activation toward more negative potentials thereby affecting sodium channel activation and promoting spontaneous and repetitive firing. The polypeptide is Toxin Td7 (Tityus discrepans (Venezuelan scorpion)).